We begin with the raw amino-acid sequence, 288 residues long: Elongation factor Ts (288 aa).

The tract at residues 82 to 85 (TDFV) is involved in Mg(2+) ion dislocation from EF-Tu.

Belongs to the EF-Ts family.

It is found in the cytoplasm. In terms of biological role, associates with the EF-Tu.GDP complex and induces the exchange of GDP to GTP. It remains bound to the aminoacyl-tRNA.EF-Tu.GTP complex up to the GTP hydrolysis stage on the ribosome. This chain is Elongation factor Ts, found in Chlorobaculum parvum (strain DSM 263 / NCIMB 8327) (Chlorobium vibrioforme subsp. thiosulfatophilum).